Consider the following 167-residue polypeptide: Leptin (167 aa).

The N-terminal stretch at 1–21 (MRCGSLCRFLWLWSCLPYIEA) is a signal peptide. An intrachain disulfide couples Cys117 to Cys167.

This sequence belongs to the leptin family.

It is found in the secreted. In terms of biological role, key player in the regulation of energy balance and body weight control. Once released into the circulation, has central and peripheral effects by binding LEPR, found in many tissues, which results in the activation of several major signaling pathways. In the hypothalamus, acts as an appetite-regulating factor that induces a decrease in food intake and an increase in energy consumption by inducing anorexinogenic factors and suppressing orexigenic neuropeptides, also regulates bone mass and secretion of hypothalamo-pituitary-adrenal hormones. In the periphery, increases basal metabolism, influences reproductive function, regulates pancreatic beta-cell function and insulin secretion, is pro-angiogenic for endothelial cell and affects innate and adaptive immunity. In the arcuate nucleus of the hypothalamus, activates by depolarization POMC neurons inducing FOS and SOCS3 expression to release anorexigenic peptides and inhibits by hyperpolarization NPY neurons inducing SOCS3 with a consequent reduction on release of orexigenic peptides. In addition to its known satiety inducing effect, has a modulatory role in nutrient absorption. In the intestine, reduces glucose absorption by enterocytes by activating PKC and leading to a sequential activation of p38, PI3K and ERK signaling pathways which exerts an inhibitory effect on glucose absorption. Acts as a growth factor on certain tissues, through the activation of different signaling pathways increases expression of genes involved in cell cycle regulation such as CCND1, via JAK2-STAT3 pathway, or VEGFA, via MAPK1/3 and PI3K-AKT1 pathways. May also play an apoptotic role via JAK2-STAT3 pathway and up-regulation of BIRC5 expression. Pro-angiogenic, has mitogenic activity on vascular endothelial cells and plays a role in matrix remodeling by regulating the expression of matrix metalloproteinases (MMPs) and tissue inhibitors of metalloproteinases (TIMPs). In innate immunity, modulates the activity and function of neutrophils by increasing chemotaxis and the secretion of oxygen radicals. Increases phagocytosis by macrophages and enhances secretion of pro-inflammatory mediators. Increases cytotoxic ability of NK cells. Plays a pro-inflammatory role, in synergy with IL1B, by inducing NOS2 which promotes the production of IL6, IL8 and Prostaglandin E2, through a signaling pathway that involves JAK2, PI3K, MAP2K1/MEK1 and MAPK14/p38. In adaptive immunity, promotes the switch of memory T-cells towards T helper-1 cell immune responses. Increases CD4(+)CD25(-) T-cell proliferation and reduces autophagy during TCR (T-cell receptor) stimulation, through MTOR signaling pathway activation and BCL2 up-regulation. The protein is Leptin (LEP) of Halichoerus grypus (Gray seal).